The primary structure comprises 315 residues: Ribosomal protein L11 methyltransferase (315 aa).

S-adenosyl-L-methionine-binding residues include threonine 164, glycine 185, aspartate 207, and asparagine 249.

It belongs to the methyltransferase superfamily. PrmA family.

It is found in the cytoplasm. It catalyses the reaction L-lysyl-[protein] + 3 S-adenosyl-L-methionine = N(6),N(6),N(6)-trimethyl-L-lysyl-[protein] + 3 S-adenosyl-L-homocysteine + 3 H(+). In terms of biological role, methylates ribosomal protein L11. The sequence is that of Ribosomal protein L11 methyltransferase from Lactobacillus johnsonii (strain CNCM I-12250 / La1 / NCC 533).